The sequence spans 229 residues: Ribonuclease 3 (229 aa).

The RNase III domain maps to Leu-7 to Gly-132. Residue Glu-45 coordinates Mg(2+). Residue Asp-49 is part of the active site. Residues Asp-118 and Glu-121 each coordinate Mg(2+). Glu-121 is a catalytic residue. The region spanning Asp-157–Ala-226 is the DRBM domain.

This sequence belongs to the ribonuclease III family. In terms of assembly, homodimer. It depends on Mg(2+) as a cofactor.

The protein localises to the cytoplasm. The enzyme catalyses Endonucleolytic cleavage to 5'-phosphomonoester.. In terms of biological role, digests double-stranded RNA. Involved in the processing of primary rRNA transcript to yield the immediate precursors to the large and small rRNAs (23S and 16S). Processes some mRNAs, and tRNAs when they are encoded in the rRNA operon. Processes pre-crRNA and tracrRNA of type II CRISPR loci if present in the organism. The protein is Ribonuclease 3 of Cereibacter sphaeroides (strain ATCC 17025 / ATH 2.4.3) (Rhodobacter sphaeroides).